The sequence spans 232 residues: Thiamine import ATP-binding protein ThiQ (232 aa).

Residues 2-230 form the ABC transporter domain; it reads LKLTDITWLY…KASASAILGI (229 aa). 32–39 is an ATP binding site; that stretch reads GPSGAGKS.

The protein belongs to the ABC transporter superfamily. Thiamine importer (TC 3.A.1.19.1) family. In terms of assembly, the complex is composed of two ATP-binding proteins (ThiQ), two transmembrane proteins (ThiP) and a solute-binding protein (ThiB).

Its subcellular location is the cell inner membrane. It catalyses the reaction thiamine(out) + ATP + H2O = thiamine(in) + ADP + phosphate + H(+). In terms of biological role, part of the ABC transporter complex ThiBPQ involved in thiamine import. Responsible for energy coupling to the transport system. This chain is Thiamine import ATP-binding protein ThiQ, found in Shigella flexneri serotype 5b (strain 8401).